A 181-amino-acid polypeptide reads, in one-letter code: Probable nicotinate-nucleotide adenylyltransferase (181 aa).

This sequence belongs to the NadD family.

It carries out the reaction nicotinate beta-D-ribonucleotide + ATP + H(+) = deamido-NAD(+) + diphosphate. Its pathway is cofactor biosynthesis; NAD(+) biosynthesis; deamido-NAD(+) from nicotinate D-ribonucleotide: step 1/1. In terms of biological role, catalyzes the reversible adenylation of nicotinate mononucleotide (NaMN) to nicotinic acid adenine dinucleotide (NaAD). In Campylobacter jejuni subsp. jejuni serotype O:6 (strain 81116 / NCTC 11828), this protein is Probable nicotinate-nucleotide adenylyltransferase.